Reading from the N-terminus, the 99-residue chain is Transcriptional regulator WhiB2 (99 aa).

One can recognise a 4Fe-4S Wbl-type domain in the interval 33-90 (LCAQTDPEAFFPEKGGSTRDAKRVCAKCEVREQCLKWAIDHDERFGIWGGMSERERRR). [4Fe-4S] cluster contacts are provided by Cys-34, Cys-57, Cys-60, and Cys-66.

The protein belongs to the WhiB family. The cofactor is [4Fe-4S] cluster. Post-translationally, the Fe-S cluster can be nitrosylated by nitric oxide (NO). In terms of processing, upon Fe-S cluster removal intramolecular disulfide bonds are formed.

It localises to the cytoplasm. Acts as a transcriptional regulator. Probably redox-responsive. The apo- but not holo-form probably binds DNA. The sequence is that of Transcriptional regulator WhiB2 (whiB2) from Bifidobacterium longum (strain NCC 2705).